A 204-amino-acid polypeptide reads, in one-letter code: Large ribosomal subunit protein eL15 (204 aa).

Belongs to the eukaryotic ribosomal protein eL15 family. In terms of assembly, component of the large ribosomal subunit.

The protein localises to the cytoplasm. Functionally, component of the large ribosomal subunit. The ribosome is a large ribonucleoprotein complex responsible for the synthesis of proteins in the cell. In Anguilla japonica (Japanese eel), this protein is Large ribosomal subunit protein eL15 (rpl15).